A 293-amino-acid polypeptide reads, in one-letter code: Glutamyl-Q tRNA(Asp) synthetase (293 aa).

L-glutamate is bound by residues 9-13 and E45; that span reads RFAPS. The 'HIGH' region motif lies at 12 to 22; that stretch reads PSPSGELHFGS. Zn(2+)-binding residues include C101, C103, Y115, and C119. L-glutamate-binding residues include Y172 and R190. Positions 228 to 232 match the 'KMSKS' region motif; it reads KLSKQ. Residue K231 participates in ATP binding.

It belongs to the class-I aminoacyl-tRNA synthetase family. GluQ subfamily. The cofactor is Zn(2+).

Its function is as follows. Catalyzes the tRNA-independent activation of glutamate in presence of ATP and the subsequent transfer of glutamate onto a tRNA(Asp). Glutamate is transferred on the 2-amino-5-(4,5-dihydroxy-2-cyclopenten-1-yl) moiety of the queuosine in the wobble position of the QUC anticodon. This is Glutamyl-Q tRNA(Asp) synthetase from Klebsiella pneumoniae (strain 342).